The sequence spans 163 residues: Ribosome maturation factor RimP (163 aa).

It belongs to the RimP family.

It localises to the cytoplasm. Required for maturation of 30S ribosomal subunits. This Streptococcus thermophilus (strain CNRZ 1066) protein is Ribosome maturation factor RimP.